The following is a 638-amino-acid chain: Chaperone protein DnaK 2 (638 aa).

The residue at position 199 (threonine 199) is a Phosphothreonine; by autocatalysis. The tract at residues 604 to 626 (AKEQAQSAPEGAQEADAAPADDV) is disordered. Over residues 613–624 (EGAQEADAAPAD) the composition is skewed to low complexity.

This sequence belongs to the heat shock protein 70 family.

Its function is as follows. Acts as a chaperone. This is Chaperone protein DnaK 2 from Colwellia psychrerythraea (strain 34H / ATCC BAA-681) (Vibrio psychroerythus).